The sequence spans 469 residues: UDP-N-acetylmuramate--L-alanine ligase (469 aa).

112–118 is an ATP binding site; it reads GTHGKTT.

The protein belongs to the MurCDEF family.

Its subcellular location is the cytoplasm. It carries out the reaction UDP-N-acetyl-alpha-D-muramate + L-alanine + ATP = UDP-N-acetyl-alpha-D-muramoyl-L-alanine + ADP + phosphate + H(+). Its pathway is cell wall biogenesis; peptidoglycan biosynthesis. In terms of biological role, cell wall formation. The protein is UDP-N-acetylmuramate--L-alanine ligase of Laribacter hongkongensis (strain HLHK9).